We begin with the raw amino-acid sequence, 447 residues long: Probable protein phosphatase 2C 71 (447 aa).

Positions 33 to 279 (SYGYASSAGK…DNITCVVVRF (247 aa)) constitute a PPM-type phosphatase domain. Positions 69, 70, 231, and 270 each coordinate Mn(2+). Positions 284–297 (SANNNGSSSSEEAN) are enriched in low complexity. The disordered stretch occupies residues 284 to 447 (SANNNGSSSS…ARKTTPSIFN (164 aa)). Basic and acidic residues predominate over residues 305–331 (NDSDHKISAKETNQDHTTVNKDLDRNT). Polar residues-rich tracts occupy residues 346–374 (ADNS…TGEK) and 392–423 (KVPN…GSTG). Basic and acidic residues predominate over residues 424-438 (ERNRKPIKVHSDSAA).

This sequence belongs to the PP2C family. Requires Mg(2+) as cofactor. The cofactor is Mn(2+).

It carries out the reaction O-phospho-L-seryl-[protein] + H2O = L-seryl-[protein] + phosphate. The enzyme catalyses O-phospho-L-threonyl-[protein] + H2O = L-threonyl-[protein] + phosphate. This chain is Probable protein phosphatase 2C 71, found in Arabidopsis thaliana (Mouse-ear cress).